Here is a 132-residue protein sequence, read N- to C-terminus: Transcription antitermination protein NusB (132 aa).

It belongs to the NusB family.

In terms of biological role, involved in transcription antitermination. Required for transcription of ribosomal RNA (rRNA) genes. Binds specifically to the boxA antiterminator sequence of the ribosomal RNA (rrn) operons. In Campylobacter lari (strain RM2100 / D67 / ATCC BAA-1060), this protein is Transcription antitermination protein NusB.